The chain runs to 247 residues: Probable transcriptional regulatory protein Hhal_2210 (247 aa).

It belongs to the TACO1 family.

The protein resides in the cytoplasm. The protein is Probable transcriptional regulatory protein Hhal_2210 of Halorhodospira halophila (strain DSM 244 / SL1) (Ectothiorhodospira halophila (strain DSM 244 / SL1)).